The primary structure comprises 358 residues: Peroxidase 12 (358 aa).

The N-terminal stretch at 1–31 (MTKAYSTRVLTFLILISLMAVTLNLFPTVEA) is a signal peptide. 4 disulfide bridges follow: C53–C134, C86–C91, C140–C335, and C220–C247. H84 acts as the Proton acceptor in catalysis. Positions 85, 88, 90, 92, and 94 each coordinate Ca(2+). P183 is a substrate binding site. N-linked (GlcNAc...) asparagine glycosylation is found at N188 and N202. H213 is a binding site for heme b. Residue T214 coordinates Ca(2+). N251 is a glycosylation site (N-linked (GlcNAc...) asparagine). D259, S262, and D267 together coordinate Ca(2+). N334 carries an N-linked (GlcNAc...) asparagine glycan.

It belongs to the peroxidase family. Classical plant (class III) peroxidase subfamily. It depends on heme b as a cofactor. The cofactor is Ca(2+). As to expression, expressed in roots and leaves.

It localises to the secreted. The protein localises to the vacuole. It catalyses the reaction 2 a phenolic donor + H2O2 = 2 a phenolic radical donor + 2 H2O. Removal of H(2)O(2), oxidation of toxic reductants, biosynthesis and degradation of lignin, suberization, auxin catabolism, response to environmental stresses such as wounding, pathogen attack and oxidative stress. These functions might be dependent on each isozyme/isoform in each plant tissue. Its function is as follows. Exhibits a Ca(2+)-pectate binding affinity which could be interpreted in vivo as a specificity to interact with the pectic structure of the cell wall. This chain is Peroxidase 12 (PER12), found in Arabidopsis thaliana (Mouse-ear cress).